Reading from the N-terminus, the 312-residue chain is MTEPKKVVEIKNLDLTFNKGKKGANKAINNVSLDIYEGETFGLVGESGSGKTTIGRAILKLYDNFITGGEILFEGKDVRNLKGSELREYRSEAQMIFQDPQASLNGRMRVKDIVAEGLDANGLVKTKAERDARVLELLRLVGLNDDHLTRYPHEFSGGQRQRIGIARALAVKPKFVVADEPISALDVSIQAQVVNLMRDIQAKENLTYLFIAHDLSMVKYISDRIGVMHWGKILEVGTSEQVYNHPIHPYTKSLLSSIPSPDPISERQRTPIVYDPTAELDGQEREMREITPGHFVFSTEAEAEVYKKNATL.

The ABC transporter domain occupies 10 to 255 (IKNLDLTFNK…PIHPYTKSLL (246 aa)). 45 to 52 (GESGSGKT) serves as a coordination point for ATP.

Belongs to the ABC transporter superfamily. As to quaternary structure, the complex is composed of two ATP-binding proteins (DppD and DppF), two transmembrane proteins (DppB and DppC) and a solute-binding protein (DppA).

Its subcellular location is the cell membrane. It catalyses the reaction a dipeptide(out) + ATP + H2O = a dipeptide(in) + ADP + phosphate + H(+). Part of the ABC transporter DppABCDF involved in dipeptide transport. Responsible for energy coupling to the transport system. The chain is Dipeptide transport ATP-binding protein DppF from Lactococcus lactis subsp. cremoris (strain MG1363).